The following is a 60-amino-acid chain: Large ribosomal subunit protein uL30 (60 aa).

Belongs to the universal ribosomal protein uL30 family. Part of the 50S ribosomal subunit.

This chain is Large ribosomal subunit protein uL30, found in Streptococcus pneumoniae serotype 2 (strain D39 / NCTC 7466).